Here is a 236-residue protein sequence, read N- to C-terminus: CD81 antigen (236 aa).

Over Met-1–Tyr-12 the chain is Cytoplasmic. Residues Leu-13–Leu-33 form a helical membrane-spanning segment. The Extracellular portion of the chain corresponds to Trp-34 to Tyr-63. The chain crosses the membrane as a helical span at residues Ile-64–Ile-84. The Cytoplasmic segment spans residues Gln-85 to Cys-89. Residues Leu-90–Gly-112 traverse the membrane as a helical segment. Residues Phe-113–Lys-201 are Extracellular-facing. Cystine bridges form between Cys-156–Cys-190 and Cys-157–Cys-175. A helical transmembrane segment spans residues Leu-202 to Met-224. Residue Glu-219 participates in cholesterol binding. Over Val-225–Tyr-236 the chain is Cytoplasmic.

The protein belongs to the tetraspanin (TM4SF) family. Homodimer. Part of a complex composed of CD19, CR2/CD21, CD81 and IFITM1/CD225 in the membrane of mature B cells. Interacts (via the second extracellular domain) with CD19; this interaction is initiated early during biosynthesis in the ER and enables trafficking of only properly folded CD19. Part of a complex that includes MHC class II/HLA-DR molecules and IFITM1. Interacts with IFITM1. Interacts with IFITM2 and IFITM3. Part of integrin-tetraspanin complex composed of CD9, CD81, beta-1 and beta-2 integrins in the membrane of monocyte/macrophages. Interacts (via the second extracellular domain) with integrin ITGAV:ITGB3. Interacts with CD247/CD3 zeta, ICAM1 and CD9 at the immune synapse on T cell membrane. Part of a GPCR-tetraspanin complex consisting at least of ADGRG1, CD81, possibly CD9, and GNA11 in which CD81 enhances the association of ADGRG1 with GNA11. Part of a complex composed of CD9, CD81, PTGFRN and IGSF8. Interacts directly with IGSF8. Interacts with CD53 and SCIMP. Interacts with SAMHD1 (via its C-terminus). Interacts with glypican GPC3 and with the transcriptional repressor HHEX; binding to GPC3 decreases the availability of free CD81 for binding to HHEX, resulting in nuclear translocation of HHEX and transcriptional repression. Interacts with CLDN1. Interacts with CLDN6 and CLDN9. Not glycosylated. Post-translationally, likely constitutively palmitoylated at low levels. Protein palmitoylation is up-regulated upon coligation of BCR and CD9-C2R-CD81 complexes in lipid rafts.

It is found in the cell membrane. It localises to the basolateral cell membrane. In terms of biological role, structural component of specialized membrane microdomains known as tetraspanin-enriched microdomains (TERMs), which act as platforms for receptor clustering and signaling. Essential for trafficking and compartmentalization of CD19 receptor on the surface of activated B cells. Upon initial encounter with microbial pathogens, enables the assembly of CD19-CR2/CD21 and B cell receptor (BCR) complexes at signaling TERMs, lowering the threshold dose of antigen required to trigger B cell clonal expansion and antibody production. In T cells, facilitates the localization of CD247/CD3 zeta at antigen-induced synapses with B cells, providing for costimulation and polarization toward T helper type 2 phenotype. Present in MHC class II compartments, may also play a role in antigen presentation. Can act both as positive and negative regulator of homotypic or heterotypic cell-cell fusion processes. Positively regulates sperm-egg fusion and may be involved in acrosome reaction. In myoblasts, associates with CD9 and PTGFRN and inhibits myotube fusion during muscle regeneration. In macrophages, associates with CD9 and beta-1 and beta-2 integrins, and prevents macrophage fusion into multinucleated giant cells specialized in ingesting complement-opsonized large particles. Also prevents the fusion of mononuclear cell progenitors into osteoclasts in charge of bone resorption. May regulate the compartmentalization of enzymatic activities. In T cells, defines the subcellular localization of dNTPase SAMHD1 and permits its degradation by the proteasome, thereby controlling intracellular dNTP levels. Also involved in cell adhesion and motility. Positively regulates integrin-mediated adhesion of macrophages, particularly relevant for the inflammatory response in the lung. The polypeptide is CD81 antigen (Cd81) (Rattus norvegicus (Rat)).